We begin with the raw amino-acid sequence, 372 residues long: NAD(P)H-quinone oxidoreductase subunit 1 (372 aa).

8 consecutive transmembrane segments (helical) span residues Ile-28–Val-48, Trp-97–Val-117, Val-130–Gly-150, Leu-176–Val-196, Ile-204–Leu-224, Leu-265–Pro-285, Ser-308–Leu-328, and Val-351–Gly-371.

This sequence belongs to the complex I subunit 1 family. In terms of assembly, NDH-1 is composed of at least 11 different subunits.

The protein localises to the cellular thylakoid membrane. The catalysed reaction is a plastoquinone + NADH + (n+1) H(+)(in) = a plastoquinol + NAD(+) + n H(+)(out). The enzyme catalyses a plastoquinone + NADPH + (n+1) H(+)(in) = a plastoquinol + NADP(+) + n H(+)(out). In terms of biological role, NDH-1 shuttles electrons from an unknown electron donor, via FMN and iron-sulfur (Fe-S) centers, to quinones in the respiratory and/or the photosynthetic chain. The immediate electron acceptor for the enzyme in this species is believed to be plastoquinone. Couples the redox reaction to proton translocation, and thus conserves the redox energy in a proton gradient. This chain is NAD(P)H-quinone oxidoreductase subunit 1, found in Picosynechococcus sp. (strain ATCC 27264 / PCC 7002 / PR-6) (Agmenellum quadruplicatum).